The chain runs to 338 residues: Fructose-1,6-bisphosphatase class 1 1 (338 aa).

Mg(2+) is bound by residues E94, D116, L118, and D119. Residues 119–122, N210, and K276 each bind substrate; that span reads DGSS. E282 contacts Mg(2+).

This sequence belongs to the FBPase class 1 family. As to quaternary structure, homotetramer. Mg(2+) is required as a cofactor.

Its subcellular location is the cytoplasm. The enzyme catalyses beta-D-fructose 1,6-bisphosphate + H2O = beta-D-fructose 6-phosphate + phosphate. The protein operates within carbohydrate biosynthesis; gluconeogenesis. The protein is Fructose-1,6-bisphosphatase class 1 1 of Paraburkholderia phymatum (strain DSM 17167 / CIP 108236 / LMG 21445 / STM815) (Burkholderia phymatum).